Reading from the N-terminus, the 337-residue chain is Glyceraldehyde-3-phosphate dehydrogenase, cytosolic (337 aa).

NAD(+) contacts are provided by residues 13-14 (RI), Asp35, and Arg82. Residues 153 to 155 (SCT), Thr184, 213 to 214 (TG), and Arg236 each bind D-glyceraldehyde 3-phosphate. The active-site Nucleophile is the Cys154. An NAD(+)-binding site is contributed by Asn318.

It belongs to the glyceraldehyde-3-phosphate dehydrogenase family. In terms of assembly, homotetramer.

Its subcellular location is the cytoplasm. The catalysed reaction is D-glyceraldehyde 3-phosphate + phosphate + NAD(+) = (2R)-3-phospho-glyceroyl phosphate + NADH + H(+). Its pathway is carbohydrate degradation; glycolysis; pyruvate from D-glyceraldehyde 3-phosphate: step 1/5. Key enzyme in glycolysis that catalyzes the first step of the pathway by converting D-glyceraldehyde 3-phosphate (G3P) into 3-phospho-D-glyceroyl phosphate. Essential for the maintenance of cellular ATP levels and carbohydrate metabolism. The protein is Glyceraldehyde-3-phosphate dehydrogenase, cytosolic (GAPC) of Antirrhinum majus (Garden snapdragon).